The chain runs to 332 residues: Ornithine carbamoyltransferase, catabolic (332 aa).

Residues 60–63 (STRT), Gln-87, Arg-111, and 138–141 (HPTQ) contribute to the carbamoyl phosphate site. Residues Asn-170, Asp-230, and 234–235 (SM) each bind L-ornithine. Carbamoyl phosphate-binding positions include 271–272 (CL) and Arg-316.

The protein belongs to the aspartate/ornithine carbamoyltransferase superfamily. OTCase family.

It localises to the cytoplasm. The catalysed reaction is carbamoyl phosphate + L-ornithine = L-citrulline + phosphate + H(+). It participates in amino-acid degradation; L-arginine degradation via ADI pathway; carbamoyl phosphate from L-arginine: step 2/2. Functionally, reversibly catalyzes the transfer of the carbamoyl group from carbamoyl phosphate (CP) to the N(epsilon) atom of ornithine (ORN) to produce L-citrulline. The sequence is that of Ornithine carbamoyltransferase, catabolic from Bacillus cereus (strain ATCC 10987 / NRS 248).